The sequence spans 398 residues: 1-deoxy-D-xylulose 5-phosphate reductoisomerase (398 aa).

Residues threonine 28, glycine 29, serine 30, isoleucine 31, glycine 54, asparagine 57, and asparagine 135 each contribute to the NADPH site. Position 136 (lysine 136) interacts with 1-deoxy-D-xylulose 5-phosphate. Glutamate 137 contacts NADPH. Aspartate 159 lines the Mn(2+) pocket. Residues serine 160, glutamate 161, serine 185, and histidine 208 each coordinate 1-deoxy-D-xylulose 5-phosphate. Glutamate 161 contacts Mn(2+). Glycine 214 is a binding site for NADPH. 1-deoxy-D-xylulose 5-phosphate contacts are provided by serine 221, asparagine 226, lysine 227, and glutamate 230. Glutamate 230 is a Mn(2+) binding site.

It belongs to the DXR family. Mg(2+) serves as cofactor. Requires Mn(2+) as cofactor.

It carries out the reaction 2-C-methyl-D-erythritol 4-phosphate + NADP(+) = 1-deoxy-D-xylulose 5-phosphate + NADPH + H(+). It functions in the pathway isoprenoid biosynthesis; isopentenyl diphosphate biosynthesis via DXP pathway; isopentenyl diphosphate from 1-deoxy-D-xylulose 5-phosphate: step 1/6. Functionally, catalyzes the NADPH-dependent rearrangement and reduction of 1-deoxy-D-xylulose-5-phosphate (DXP) to 2-C-methyl-D-erythritol 4-phosphate (MEP). The protein is 1-deoxy-D-xylulose 5-phosphate reductoisomerase of Rhodococcus jostii (strain RHA1).